A 446-amino-acid polypeptide reads, in one-letter code: Coagulation factor VII (446 aa).

An N-terminal signal peptide occupies residues 1 to 24 (MVPQAHGLLLLCFLLQLQGPLGTA). The propeptide occupies 25–41 (VFITQEEAHGVLHRQRR). A Gla domain is found at 42–86 (ANSLLEELWPGSLERECNEEQCSFEEAREIFKSPERTKQFWIVYS). Residues Glu-47, Glu-48, Glu-55, Glu-57, Glu-60, Glu-61, Glu-66, Glu-67, Glu-70, and Glu-76 each carry the 4-carboxyglutamate modification. Residues Cys-58 and Cys-63 are joined by a disulfide bond. In terms of domain architecture, EGF-like 1; calcium-binding spans 87–123 (DGDQCASNPCQNGGTCQDHLKSYVCFCLLDFEGRNCE). 10 disulfide bridges follow: Cys-91-Cys-102, Cys-96-Cys-111, Cys-113-Cys-122, Cys-132-Cys-143, Cys-139-Cys-153, Cys-155-Cys-168, Cys-176-Cys-303, Cys-200-Cys-205, Cys-219-Cys-235, and Cys-351-Cys-370. O-linked (Glc...) serine; alternate glycosylation is present at Ser-93. O-linked (Xyl...) serine; alternate glycosylation occurs at Ser-93. The residue at position 104 (Asp-104) is a (3R)-3-hydroxyaspartate. The EGF-like 2 domain maps to 128–169 (EQLICANENGDCDQYCRDHVGTKRTCSCHEDYTLQPDEVSCK). Asn-186 carries N-linked (GlcNAc...) asparagine glycosylation. Residues 194-433 (IVGGNVCPKG…YIDWLVRHMD (240 aa)) form the Peptidase S1 domain. Catalysis depends on His-234, which acts as the Charge relay system. Asn-244 is a glycosylation site (N-linked (GlcNAc...) asparagine). Asp-283 (charge relay system) is an active-site residue. Asp-379 is a substrate binding site. Cys-381 and Cys-409 are joined by a disulfide. The active-site Charge relay system is the Ser-385.

It belongs to the peptidase S1 family. In terms of assembly, heterodimer of a light chain and a heavy chain linked by a disulfide bond. Post-translationally, the vitamin K-dependent, enzymatic carboxylation of some glutamate residues allows the modified protein to bind calcium. In terms of processing, the iron and 2-oxoglutarate dependent 3-hydroxylation of aspartate and asparagine is (R) stereospecific within EGF domains. Can be either O-glucosylated or O-xylosylated at Ser-93 by POGLUT1. Plasma and liver.

Its subcellular location is the secreted. It carries out the reaction Selective cleavage of Arg-|-Ile bond in factor X to form factor Xa.. In terms of biological role, initiates the extrinsic pathway of blood coagulation. Serine protease that circulates in the blood in a zymogen form. Factor VII is converted to factor VIIa by factor Xa, factor XIIa, factor IXa, or thrombin by minor proteolysis. In the presence of tissue factor and calcium ions, factor VIIa then converts factor X to factor Xa by limited proteolysis. Factor VIIa also converts factor IX to factor IXa in the presence of tissue factor and calcium. The sequence is that of Coagulation factor VII (F7) from Mus musculus (Mouse).